Consider the following 233-residue polypeptide: Translation initiation factor IF-3 (233 aa).

Disordered regions lie at residues 1–21 (MAIQHRDPRGGGGSRDARTNR) and 184–233 (LQSQ…AAQR). Positions 193 to 211 (AAAAAAPAAAPAAPAAGAP) are enriched in low complexity. The span at 212 to 223 (APAPAPAAPAPA) shows a compositional bias: pro residues. Low complexity predominate over residues 224-233 (PAAADPAAQR).

The protein belongs to the IF-3 family. As to quaternary structure, monomer.

It is found in the cytoplasm. Functionally, IF-3 binds to the 30S ribosomal subunit and shifts the equilibrium between 70S ribosomes and their 50S and 30S subunits in favor of the free subunits, thus enhancing the availability of 30S subunits on which protein synthesis initiation begins. The chain is Translation initiation factor IF-3 from Anaeromyxobacter dehalogenans (strain 2CP-C).